Reading from the N-terminus, the 555-residue chain is CTP synthase (555 aa).

Positions 1-279 (MATNRAKSST…DNYIIRRLNL (279 aa)) are amidoligase domain. S21 lines the CTP pocket. UTP is bound at residue S21. ATP-binding positions include 22–27 (SLGKGL) and D79. The Mg(2+) site is built by D79 and E153. Residues 160–162 (DIE), 200–205 (KTKPTQ), and K236 each bind CTP. Residues 200–205 (KTKPTQ) and K236 each bind UTP. The 250-residue stretch at 304–553 (TIGIVGKYID…VDAALKHQAG (250 aa)) folds into the Glutamine amidotransferase type-1 domain. Residue G367 coordinates L-glutamine. The active-site Nucleophile; for glutamine hydrolysis is C394. L-glutamine-binding positions include 395–398 (LGLQ), E417, and R478. Catalysis depends on residues H526 and E528.

This sequence belongs to the CTP synthase family. In terms of assembly, homotetramer.

It carries out the reaction UTP + L-glutamine + ATP + H2O = CTP + L-glutamate + ADP + phosphate + 2 H(+). The enzyme catalyses L-glutamine + H2O = L-glutamate + NH4(+). It catalyses the reaction UTP + NH4(+) + ATP = CTP + ADP + phosphate + 2 H(+). Its pathway is pyrimidine metabolism; CTP biosynthesis via de novo pathway; CTP from UDP: step 2/2. Its activity is regulated as follows. Allosterically activated by GTP, when glutamine is the substrate; GTP has no effect on the reaction when ammonia is the substrate. The allosteric effector GTP functions by stabilizing the protein conformation that binds the tetrahedral intermediate(s) formed during glutamine hydrolysis. Inhibited by the product CTP, via allosteric rather than competitive inhibition. Functionally, catalyzes the ATP-dependent amination of UTP to CTP with either L-glutamine or ammonia as the source of nitrogen. Regulates intracellular CTP levels through interactions with the four ribonucleotide triphosphates. The sequence is that of CTP synthase from Corynebacterium jeikeium (strain K411).